A 132-amino-acid polypeptide reads, in one-letter code: Large ribosomal subunit protein uL14 (132 aa).

This sequence belongs to the universal ribosomal protein uL14 family. Part of the 50S ribosomal subunit. Forms a cluster with proteins L3 and L24e, part of which may contact the 16S rRNA in 2 intersubunit bridges.

Binds to 23S rRNA. Forms part of two intersubunit bridges in the 70S ribosome. This chain is Large ribosomal subunit protein uL14, found in Methanococcus maripaludis (strain C7 / ATCC BAA-1331).